A 182-amino-acid chain; its full sequence is ATP-dependent protease subunit HslV (182 aa).

Thr9 is an active-site residue. Na(+) contacts are provided by Ala167, Cys170, and Thr173.

It belongs to the peptidase T1B family. HslV subfamily. A double ring-shaped homohexamer of HslV is capped on each side by a ring-shaped HslU homohexamer. The assembly of the HslU/HslV complex is dependent on binding of ATP.

It localises to the cytoplasm. The catalysed reaction is ATP-dependent cleavage of peptide bonds with broad specificity.. Its activity is regulated as follows. Allosterically activated by HslU binding. Protease subunit of a proteasome-like degradation complex believed to be a general protein degrading machinery. The protein is ATP-dependent protease subunit HslV of Enterococcus faecalis (strain ATCC 700802 / V583).